A 232-amino-acid chain; its full sequence is Octanoyltransferase (232 aa).

Residues 44-219 (EHTGDELWVV…QLARQFGLVL (176 aa)) form the BPL/LPL catalytic domain. Substrate is bound by residues 83–90 (RGGQVTYH), 150–152 (ALG), and 163–165 (GLS). Catalysis depends on C181, which acts as the Acyl-thioester intermediate.

Belongs to the LipB family.

The protein localises to the cytoplasm. It carries out the reaction octanoyl-[ACP] + L-lysyl-[protein] = N(6)-octanoyl-L-lysyl-[protein] + holo-[ACP] + H(+). It participates in protein modification; protein lipoylation via endogenous pathway; protein N(6)-(lipoyl)lysine from octanoyl-[acyl-carrier-protein]: step 1/2. In terms of biological role, catalyzes the transfer of endogenously produced octanoic acid from octanoyl-acyl-carrier-protein onto the lipoyl domains of lipoate-dependent enzymes. Lipoyl-ACP can also act as a substrate although octanoyl-ACP is likely to be the physiological substrate. The chain is Octanoyltransferase from Xanthomonas campestris pv. campestris (strain B100).